Consider the following 1514-residue polypeptide: Neuropathy target esterase sws (1514 aa).

The Lumenal portion of the chain corresponds to 1–34 (MDVLELLRASATGSYTALFSDAWCQYVSKQITNS). The helical transmembrane segment at 35–55 (MYLYCALGVLSMVFLAWFMYF) threads the bilayer. The Cytoplasmic segment spans residues 56 to 1514 (KRLARIRLRD…KGGAYNETKN (1459 aa)). 175–302 (IFGHFEKPVF…IRVIQVIMIR (128 aa)) contributes to the a nucleoside 3',5'-cyclic phosphate binding site. Residues 337–352 (STHSSQCSRQTGSQPT) are compositionally biased toward polar residues. The disordered stretch occupies residues 337–418 (STHSSQCSRQ…NPNPDVINTS (82 aa)). Over residues 356–374 (PAPTCSNTTTTASPTTANT) the composition is skewed to low complexity. The residue at position 457 (Ser457) is a Phosphoserine. Residues 515–644 (ELGL…VVRR) and 633–760 (IVLD…LSHR) each bind a nucleoside 3',5'-cyclic phosphate. Residues 987-1153 (LVLGGGGARG…VNNLPGQLWR (167 aa)) form the PNPLA domain. Residues 991 to 996 (GGGARG) carry the GXGXXG motif. A GXSXG motif is present at residues 1018–1022 (GVSIG). Residue Ser1020 is the Nucleophile of the active site. The active-site Proton acceptor is Asp1140. A DGA/G motif is present at residues 1140–1142 (DGG). Ser1234 is subject to Phosphoserine. Residues 1409 to 1514 (EKSIHSAATS…KGGAYNETKN (106 aa)) form a disordered region. 2 stretches are compositionally biased toward basic and acidic residues: residues 1425 to 1449 (RSRE…ETER) and 1456 to 1470 (LDRK…KEPE). Residues 1471–1489 (QEQELETEEPNQENTEVEE) are compositionally biased toward acidic residues.

Belongs to the NTE family. In terms of assembly, interacts with Pka-C3; interaction inhibits the catalytic function of Pka-C3 and the esterase activity of sws.

The protein localises to the endoplasmic reticulum membrane. The catalysed reaction is a 1-acyl-sn-glycero-3-phosphocholine + H2O = sn-glycerol 3-phosphocholine + a fatty acid + H(+). Phospholipase B that deacylates intracellular phosphatidylcholine (PtdCho), generating glycerophosphocholine (GroPtdCho). This deacylation occurs at both sn-2 and sn-1 positions of PtdCho. Its specific chemical modification by certain organophosphorus (OP) compounds leads to distal axonopathy. Plays a role in the signaling mechanism between neurons and glia that regulates glia wrapping during development of the adult brain. Essential for membrane lipid homeostasis and cell survival in both neurons and glia of the adult brain. This chain is Neuropathy target esterase sws, found in Drosophila ananassae (Fruit fly).